Consider the following 378-residue polypeptide: UPF0754 membrane protein BCA_0919 (378 aa).

2 consecutive transmembrane segments (helical) span residues 1-21 (MNIW…GGFT) and 357-377 (YLGA…LLFL).

It belongs to the UPF0754 family.

The protein localises to the cell membrane. In Bacillus cereus (strain 03BB102), this protein is UPF0754 membrane protein BCA_0919.